The primary structure comprises 487 residues: Argininosuccinate lyase (487 aa).

The protein belongs to the lyase 1 family. Argininosuccinate lyase subfamily.

It localises to the cytoplasm. It carries out the reaction 2-(N(omega)-L-arginino)succinate = fumarate + L-arginine. It functions in the pathway amino-acid biosynthesis; L-arginine biosynthesis; L-arginine from L-ornithine and carbamoyl phosphate: step 3/3. The polypeptide is Argininosuccinate lyase (Methanothrix thermoacetophila (strain DSM 6194 / JCM 14653 / NBRC 101360 / PT) (Methanosaeta thermophila)).